A 378-amino-acid polypeptide reads, in one-letter code: Chaperone protein DnaJ 1 (378 aa).

A J domain is found at 4–68 (DYYGILGVDR…DKRRIVDMGG (65 aa)). The CR-type zinc finger occupies 129–211 (GVKKDLTLDT…CAGDGRVRAR (83 aa)). 8 residues coordinate Zn(2+): C142, C145, C159, C162, C185, C188, C199, and C202. CXXCXGXG motif repeat units follow at residues 142-149 (CSKCHGSG), 159-166 (CGTCHGSG), 185-192 (CHTCNGTG), and 199-206 (CDECAGDG).

The protein belongs to the DnaJ family. Homodimer. The cofactor is Zn(2+).

It is found in the cytoplasm. Participates actively in the response to hyperosmotic and heat shock by preventing the aggregation of stress-denatured proteins and by disaggregating proteins, also in an autonomous, DnaK-independent fashion. Unfolded proteins bind initially to DnaJ; upon interaction with the DnaJ-bound protein, DnaK hydrolyzes its bound ATP, resulting in the formation of a stable complex. GrpE releases ADP from DnaK; ATP binding to DnaK triggers the release of the substrate protein, thus completing the reaction cycle. Several rounds of ATP-dependent interactions between DnaJ, DnaK and GrpE are required for fully efficient folding. Also involved, together with DnaK and GrpE, in the DNA replication of plasmids through activation of initiation proteins. This is Chaperone protein DnaJ 1 from Corynebacterium efficiens (strain DSM 44549 / YS-314 / AJ 12310 / JCM 11189 / NBRC 100395).